A 203-amino-acid chain; its full sequence is Recombination protein RecR (203 aa).

A C4-type zinc finger spans residues 56 to 71; the sequence is CSVCGNVSDEERCRIC. In terms of domain architecture, Toprim spans 79–179; sequence SLVCVVEEPK…TVTRIASGLP (101 aa).

The protein belongs to the RecR family.

In terms of biological role, may play a role in DNA repair. It seems to be involved in an RecBC-independent recombinational process of DNA repair. It may act with RecF and RecO. The sequence is that of Recombination protein RecR from Mycolicibacterium smegmatis (strain ATCC 700084 / mc(2)155) (Mycobacterium smegmatis).